A 244-amino-acid polypeptide reads, in one-letter code: ATP-dependent dethiobiotin synthetase BioD 1 (244 aa).

Residue 12–17 (NVGKTV) participates in ATP binding. Thr16 contacts Mg(2+). The active site involves Lys37. An ATP-binding site is contributed by Asp68. Mg(2+) contacts are provided by Asp68 and Glu126. ATP is bound by residues 186-187 (NR), 215-217 (PYL), and Glu222.

Belongs to the dethiobiotin synthetase family. In terms of assembly, homodimer. It depends on Mg(2+) as a cofactor.

The protein resides in the cytoplasm. The enzyme catalyses (7R,8S)-7,8-diammoniononanoate + CO2 + ATP = (4R,5S)-dethiobiotin + ADP + phosphate + 3 H(+). The protein operates within cofactor biosynthesis; biotin biosynthesis; biotin from 7,8-diaminononanoate: step 1/2. In terms of biological role, catalyzes a mechanistically unusual reaction, the ATP-dependent insertion of CO2 between the N7 and N8 nitrogen atoms of 7,8-diaminopelargonic acid (DAPA, also called 7,8-diammoniononanoate) to form a ureido ring. This chain is ATP-dependent dethiobiotin synthetase BioD 1, found in Pasteurella multocida (strain Pm70).